The primary structure comprises 368 residues: GDSL esterase/lipase At4g16230 (368 aa).

The first 24 residues, 1-24, serve as a signal peptide directing secretion; that stretch reads MSLLVFLCQIIVLSVLFFSEVCLA. The active-site Nucleophile is S37. 2 N-linked (GlcNAc...) asparagine glycosylation sites follow: N117 and N286. Catalysis depends on residues D329 and H332.

Belongs to the 'GDSL' lipolytic enzyme family.

It is found in the secreted. The polypeptide is GDSL esterase/lipase At4g16230 (Arabidopsis thaliana (Mouse-ear cress)).